The primary structure comprises 176 residues: Protein tyrosine phosphatase PRL-1 (176 aa).

A Tyrosine-protein phosphatase domain is found at 13-165 (GESDAVVFRF…YKPRHQEGNE (153 aa)). A disulfide bond links cysteine 52 and cysteine 107. Catalysis depends on aspartate 75, which acts as the Proton donor. The Phosphocysteine intermediate role is filled by cysteine 107. Substrate is bound at residue 109–113 (AGLGR). Position 173 is a cysteine methyl ester (cysteine 173). Cysteine 173 carries the S-farnesyl cysteine lipid modification. A propeptide spans 174–176 (AVM) (removed in mature form).

It belongs to the protein-tyrosine phosphatase family.

The protein localises to the flagellar pocket. The enzyme catalyses O-phospho-L-tyrosyl-[protein] + H2O = L-tyrosyl-[protein] + phosphate. Activated in a reduced environment which promotes the reduction of the disulfide bond between the regulatory Cys-52 and the catalytic Cys-107 residues. Inhibited by sodium orthovanadate. Its function is as follows. Has protein tyrosine phosphatase activity. In Trypanosoma cruzi (strain CL Brener), this protein is Protein tyrosine phosphatase PRL-1.